The following is a 405-amino-acid chain: Dynactin subunit 2 (405 aa).

Residues 1-25 (MADPKYADLPGIARNEPDVYETSDL) are disordered. At A2 the chain carries N-acetylalanine. Y6 carries the phosphotyrosine modification. Phosphoserine is present on S85. Phosphotyrosine is present on Y88. The stretch at 105–132 (YQRLLHEVQELTTEVEKIKMTVKESATE) forms a coiled coil. At T136 the chain carries Phosphothreonine. The interval 187 to 207 (KNTKGAGSGGKTTSGSPPDSS) is disordered. Phosphoserine is present on S324.

Belongs to the dynactin subunit 2 family. As to quaternary structure, subunit of dynactin, a multiprotein complex part of a tripartite complex with dynein and a adapter, such as BICDL1, BICD2 or HOOK3. The dynactin complex is built around ACTR1A/ACTB filament and consists of an actin-related filament composed of a shoulder domain, a pointed end and a barbed end. Its length is defined by its flexible shoulder domain. The soulder is composed of 2 DCTN1 subunits, 4 DCTN2 and 2 DCTN3. The 4 DCNT2 (via N-terminus) bind the ACTR1A filament and act as molecular rulers to determine the length. The pointed end is important for binding dynein-dynactin cargo adapters and consists of 4 subunits: ACTR10, DCNT4, DCTN5 and DCTN6. The barbed end is composed of a CAPZA1:CAPZB heterodimers, which binds ACTR1A/ACTB filament and dynactin and stabilizes dynactin. Interacts with BICD2 and CEP135. Interacts with DYNAP. Interacts with ECPAS. Interacts with MAPRE1.

Its subcellular location is the cytoplasm. The protein localises to the cytoskeleton. It is found in the microtubule organizing center. It localises to the centrosome. The protein resides in the membrane. In terms of biological role, part of the dynactin complex that activates the molecular motor dynein for ultra-processive transport along microtubules. In the dynactin soulder domain, binds the ACTR1A filament and acts as a molecular ruler to determine the length. Modulates cytoplasmic dynein binding to an organelle, and plays a role in prometaphase chromosome alignment and spindle organization during mitosis. Involved in anchoring microtubules to centrosomes. May play a role in synapse formation during brain development. The polypeptide is Dynactin subunit 2 (DCTN2) (Sus scrofa (Pig)).